The chain runs to 293 residues: Aspartate carbamoyltransferase catalytic subunit (293 aa).

Carbamoyl phosphate-binding residues include arginine 50 and threonine 51. Lysine 78 contributes to the L-aspartate binding site. The carbamoyl phosphate site is built by arginine 100, histidine 127, and glutamine 130. Residues arginine 160 and arginine 210 each coordinate L-aspartate. Carbamoyl phosphate is bound by residues alanine 253 and proline 254.

This sequence belongs to the aspartate/ornithine carbamoyltransferase superfamily. ATCase family. Heterododecamer (2C3:3R2) of six catalytic PyrB chains organized as two trimers (C3), and six regulatory PyrI chains organized as three dimers (R2).

The enzyme catalyses carbamoyl phosphate + L-aspartate = N-carbamoyl-L-aspartate + phosphate + H(+). It participates in pyrimidine metabolism; UMP biosynthesis via de novo pathway; (S)-dihydroorotate from bicarbonate: step 2/3. Catalyzes the condensation of carbamoyl phosphate and aspartate to form carbamoyl aspartate and inorganic phosphate, the committed step in the de novo pyrimidine nucleotide biosynthesis pathway. This is Aspartate carbamoyltransferase catalytic subunit from Staphylococcus aureus (strain USA300).